The following is a 146-amino-acid chain: Prolactin-inducible protein homolog (146 aa).

The first 28 residues, Met-1–Ala-28, serve as a signal peptide directing secretion. At Gln-29 the chain carries Pyrrolidone carboxylic acid. 2 disulfide bridges follow: Cys-65-Cys-91 and Cys-89-Cys-123. Asn-105 carries N-linked (GlcNAc...) asparagine glycosylation.

It belongs to the PIP family. In terms of assembly, monomer. Interacts with AZGP1.

The protein localises to the secreted. This is Prolactin-inducible protein homolog (PIP) from Macaca fuscata fuscata (Japanese macaque).